A 527-amino-acid chain; its full sequence is Zinc finger protein 35 (527 aa).

A globular domain region spans residues 9 to 221 (MALAPWGPVK…NPKTQLGQKP (213 aa)). A disordered region spans residues 16 to 38 (PVKVKKEEEEEENFPGQASSQQV). Glycyl lysine isopeptide (Lys-Gly) (interchain with G-Cter in SUMO2) cross-links involve residues K20, K21, K99, K117, K125, K144, K158, K189, and K214. 2 consecutive C2H2-type zinc fingers follow at residues 222–244 (FTCS…QRIH) and 250–272 (FECH…QRIH). K276 is covalently cross-linked (Glycyl lysine isopeptide (Lys-Gly) (interchain with G-Cter in SUMO2)). 9 C2H2-type zinc fingers span residues 278 to 300 (YVCS…QKIH), 306 to 328 (FKCN…QKVH), 334 to 356 (YECN…QRIH), 362 to 384 (FACN…QRSH), 390 to 412 (YECK…QRIH), 418 to 440 (YDCS…QRIH), 446 to 468 (YVCN…QRIH), 474 to 496 (YTCN…QRTH), and 502 to 524 (YECE…HRTH).

It belongs to the krueppel C2H2-type zinc-finger protein family.

It is found in the nucleus. Functionally, may be involved in transcriptional regulation. Involved in cell differentiation and/or proliferation. The chain is Zinc finger protein 35 (ZNF35) from Homo sapiens (Human).